The chain runs to 165 residues: Cysteine and tyrosine-rich protein 1 (165 aa).

Positions 1–29 (MDALRLPRRLGVLLWKVVLLFVYAEDCRA) are cleaved as a signal peptide. Over 30 to 61 (QCGKDCRAYCCNGSTPHCCSYYAYIGSILSGT) the chain is Extracellular. The chain crosses the membrane as a helical span at residues 62 to 82 (AIAGIVFGIVFIMGVIAGIAI). At 83-165 (CICMCMKNNR…SSSQNRICNN (83 aa)) the chain is on the cytoplasmic side. Residues 127–165 (DLPPPYSPAPQASAQRSPPPPYPGNSRKYSSSQNRICNN) are disordered. Residues 153 to 165 (RKYSSSQNRICNN) are compositionally biased toward polar residues.

This sequence belongs to the CYYR1 family.

It is found in the membrane. This chain is Cysteine and tyrosine-rich protein 1 (Cyyr1), found in Rattus norvegicus (Rat).